A 340-amino-acid chain; its full sequence is Sodium/bile acid cotransporter 7 (340 aa).

Topologically, residues 1 to 10 (MRLLERVRKE) are cytoplasmic. The helical transmembrane segment at 11-31 (WFMVGIVVAIGAAKLEPSVGV) threads the bilayer. The Extracellular portion of the chain corresponds to 32–37 (NGGPLK). The helical transmembrane segment at 38 to 58 (PEITVSYIAVATIFFNSGLSL) threads the bilayer. The Cytoplasmic portion of the chain corresponds to 59–71 (KTEELTSALVHLK). Residues 72–92 (LHLFIQVFTLAFFPTTIWLFL) form a helical membrane-spanning segment. The Extracellular portion of the chain corresponds to 93–116 (QLLSVTSINEWLLKGLQTVGCMPP). The helical transmembrane segment at 117–137 (PVSSAVILTKAVGGNEAAAIF) threads the bilayer. N138 is a topological domain (cytoplasmic). A helical membrane pass occupies residues 139-159 (SAFGSFLGIVVTPVLLLLFLG). The Extracellular portion of the chain corresponds to 160–163 (SSSS). The helical transmembrane segment at 164–184 (VPFTSIFSQLFMTVVVPLVIG) threads the bilayer. Over 185 to 201 (QIVRRYIKDWLERKKPP) the chain is Cytoplasmic. The chain crosses the membrane as a helical span at residues 202–222 (FGVVSSSVLLMIIYTTFCDTF). Topologically, residues 223-234 (SNPNIDLDKFSL) are extracellular. A helical membrane pass occupies residues 235-255 (ILILFIIVSIQLSFMLLTFVF). Topologically, residues 256–270 (STRNNSGFTPADTVA) are cytoplasmic. The chain crosses the membrane as a helical span at residues 271–291 (IIFCSTHKSLTLGIPMLKIVF). Over 292–298 (AGHEHLS) the chain is Extracellular. A helical membrane pass occupies residues 299-319 (LISLPLLIYHPAQILLGSVLV). Over 320–340 (PTIKSWMVSRQKGVKLTRPTV) the chain is Cytoplasmic.

This sequence belongs to the bile acid:sodium symporter (BASS) (TC 2.A.28) family. As to expression, strongly expressed in liver, adrenal gland, small intestine and colon. Moderately expressed in heart, lung, kidney and spleen. Weakly expressed in brain.

The protein resides in the cell membrane. The protein localises to the endoplasmic reticulum membrane. It localises to the golgi apparatus membrane. Involved in teeth and skeletal development. Has an essential role in the biosynthesis and trafficking of glycosaminoglycans and glycoproteins to produce a proper functioning extracellular matrix. Required for extracellular matrix mineralization. Also involved in the regulation of cellular calcium homeostasis. Does not show transport activity towards bile acids or steroid sulfates (including taurocholate, cholate, chenodeoxycholate, estrone-3-sulfate, dehydroepiandrosterone sulfate (DHEAS) and pregnenolone sulfate). This Rattus norvegicus (Rat) protein is Sodium/bile acid cotransporter 7 (Slc10a7).